A 482-amino-acid polypeptide reads, in one-letter code: UDP-N-acetylmuramate--L-alanine ligase (482 aa).

Position 129–135 (129–135 (GTHGKTT)) interacts with ATP.

Belongs to the MurCDEF family.

The protein resides in the cytoplasm. The enzyme catalyses UDP-N-acetyl-alpha-D-muramate + L-alanine + ATP = UDP-N-acetyl-alpha-D-muramoyl-L-alanine + ADP + phosphate + H(+). Its pathway is cell wall biogenesis; peptidoglycan biosynthesis. Functionally, cell wall formation. The protein is UDP-N-acetylmuramate--L-alanine ligase of Acinetobacter baylyi (strain ATCC 33305 / BD413 / ADP1).